Reading from the N-terminus, the 64-residue chain is Large ribosomal subunit protein bL35 (64 aa).

Belongs to the bacterial ribosomal protein bL35 family.

The chain is Large ribosomal subunit protein bL35 from Amoebophilus asiaticus (strain 5a2).